Consider the following 508-residue polypeptide: O-acetyltransferase pigM (508 aa).

A disordered region spans residues 166–188 (TPAPDERGKISPSLEDAAGSPRT).

It functions in the pathway secondary metabolite biosynthesis. Functionally, O-acetyltransferase; part of the gene cluster that mediates the biosynthesis of azaphilone pigments (MonAzPs), a complex mixture of compounds with a common azaphilone skeleton very widely used as food colorants. PigM and pigO are involved in the elimination of the omega-1 alcohol with pigM acting as an O-acetyltransferase that synthesizes the O-11 acetyl intermediate whereas pigO eliminates acetic acid to yield an intermediate with a C10(11) double bond. The first step of the pathway is performed by the nrPKS pigA that forms the hexaketide precursor from successive condensations of five malonyl-CoA units, with a simple acetyl-CoA starter unit. The role of esterase pigG is not clear, but it may play at most a supplementary role in the formation of the benzaldehyde produced by the pigA nrPKS. This very reactive benzaldehyde is intercepted by the pigC ketoreductase that to provide the first stable enzyme-free MonAzPs intermediate, 6-(4-hydroxy-2-oxopentyl)-3-methyl-2,4-dioxocyclohexane carbaldehyde, also known as M7PKS-1. The FAD-dependent monooxygenase pigN hydroxylates M7PKS-1 at C-4, which triggers the formation of the pyran ring. PigJ, pigK and pigD are involved in the acetylation of the pyran ring. PigJ and pigK form the two subunits of a dedicated fungal FAS that produces the side chain fatty acyl moiety of MonAzPs and pigD transfers the fatty acyl chain to the C-4 alcohol. PigM and pigO are involved in the elimination of the omega-1 alcohol. PigM acts as an O-acetyltransferase that synthesizes the putative O-11 acetyl intermediate whereas pigO eliminates acetic acid to yield an intermediate with a C10(11) double bond. The dehydration of the C-11 alcohol followed by the reduction of the C6(7) double bond by the NAD(P)H-dependent oxidoreductase pigE increases the electrophilicity of the C-5 ketone of the resulting acyl benzopyran. This in turn sets up the C-5 ketone for an intramolecular Knoevenagel aldol condensation with the C-20 enol of the side chain. This condensation affords the characteristic linear tricyclic carbon skeletons of the yellow pigments that serve as the common precursors for the classical yellow pigments monascin and ankaflavin, orange pigments rubopunctatin and monascorubrin, and red pigments ribropunctamine and monascorubramine. The FAD-dependent oxidoreductase pigF is especially invoved in the biosynthesis of orange and red pigments via desaturation of C6(7). The sequence is that of O-acetyltransferase pigM from Monascus ruber (Mold).